The primary structure comprises 239 residues: uncharacterized protein (239 aa).

8 consecutive transmembrane segments (helical) span residues 4-24, 29-49, 61-81, 84-104, 116-136, 139-159, 180-200, and 218-238; these read LIPK…LGMV, VIWH…VYPV, YQKW…ISVF, PPLI…MYFA, VAGV…GMGT, GWAW…SFYV, LLLP…AFIP, and IGIL…LFIT.

The protein to H.influenzae HI_1626.

It is found in the cell membrane. This is an uncharacterized protein from Bacillus subtilis (strain 168).